The primary structure comprises 249 residues: uncharacterized protein (249 aa).

The protein belongs to the ycf73 family.

The protein localises to the plastid. Its subcellular location is the chloroplast. This is an uncharacterized protein from Oryza sativa (Rice).